Here is a 423-residue protein sequence, read N- to C-terminus: AP-1 complex subunit mu-2 (423 aa).

Residues 168 to 421 (KNEVFIDVIE…ITQSGDYQLR (254 aa)) enclose the MHD domain.

It belongs to the adaptor complexes medium subunit family. Adaptor protein complex 1 (AP-1) is a heterotetramer composed of two large adaptins (gamma-type subunit AP1G1 and beta-type subunit AP1B1), a medium adaptin (mu-type subunit AP1M1 or AP1M2) and a small adaptin (sigma-type subunit AP1S1 or AP1S2 or AP1S3). Interacts with P2X4. Phosphorylation of membrane-bound AP1M1/AP1M2 increases its affinity for sorting signals.

It is found in the golgi apparatus. It localises to the cytoplasmic vesicle. The protein localises to the clathrin-coated vesicle membrane. Functionally, subunit of clathrin-associated adaptor protein complex 1 that plays a role in protein sorting in the trans-Golgi network (TGN) and endosomes. The AP complexes mediate the recruitment of clathrin to membranes and the recognition of sorting signals within the cytosolic tails of transmembrane cargo molecules. This is AP-1 complex subunit mu-2 (AP1M2) from Homo sapiens (Human).